The following is an 86-amino-acid chain: METAIVAAASAIGAGIAVATGIGAGIGQGIAAAKAAEAVGNQPEAKGDITSTLLLGVAIAESSAIYGLVISIILLFVNPFFKYLGM.

Helical transmembrane passes span 4 to 24 (AIVAAASAIGAGIAVATGIGA) and 57 to 77 (VAIAESSAIYGLVISIILLFV).

The protein belongs to the ATPase C chain family. F-type ATPases have 2 components, F(1) - the catalytic core - and F(0) - the membrane proton channel. F(1) has five subunits: alpha(3), beta(3), gamma(1), delta(1), epsilon(1). F(0) has three main subunits: a(1), b(2) and c(10-14). The alpha and beta chains form an alternating ring which encloses part of the gamma chain. F(1) is attached to F(0) by a central stalk formed by the gamma and epsilon chains, while a peripheral stalk is formed by the delta and b chains.

It localises to the cell membrane. Functionally, f(1)F(0) ATP synthase produces ATP from ADP in the presence of a proton or sodium gradient. F-type ATPases consist of two structural domains, F(1) containing the extramembraneous catalytic core and F(0) containing the membrane proton channel, linked together by a central stalk and a peripheral stalk. During catalysis, ATP synthesis in the catalytic domain of F(1) is coupled via a rotary mechanism of the central stalk subunits to proton translocation. In terms of biological role, key component of the F(0) channel; it plays a direct role in translocation across the membrane. A homomeric c-ring of between 10-14 subunits forms the central stalk rotor element with the F(1) delta and epsilon subunits. This chain is ATP synthase subunit c, found in Clostridioides difficile (strain 630) (Peptoclostridium difficile).